Consider the following 220-residue polypeptide: MSAGDISAINIKSVKKNRRRKKRRTADVSSSDSSSSDPSSESEKEEIQNGAIEEHVGENGKSDHVFSKGNDEDKQEDIAIEVSDVELTDEESKDLKLNSKEVIDDLTKISLSKIPEPTKSQNKEGFMNASKIAENIKLAREEYNELAENFVPKGKDKTKLREEYLNLLFENYGDDINRLRAAPDFTNKSLSILADALQEGIGMFDIGELELVLKNKEMEN.

The disordered stretch occupies residues 1-91; sequence MSAGDISAIN…VSDVELTDEE (91 aa). The segment covering 13-24 has biased composition (basic residues); that stretch reads SVKKNRRRKKRR. Positions 29–39 are enriched in low complexity; the sequence is SSSDSSSSDPS. Over residues 41–72 the composition is skewed to basic and acidic residues; the sequence is ESEKEEIQNGAIEEHVGENGKSDHVFSKGNDE. A compositionally biased stretch (acidic residues) spans 73 to 91; the sequence is DKQEDIAIEVSDVELTDEE. Ser-83 carries the phosphoserine modification. At Thr-88 the chain carries Phosphothreonine. Position 99 is a phosphoserine (Ser-99).

This sequence belongs to the RSA3 family. Associates with nucleolar pre-ribosomal particles. Interacts with DBP6. Together with DBP6, NOP8, URB1 and URB2, forms an RNA-independent complex, which is required during early maturation of nascent 60S ribosomal subunits.

Its subcellular location is the nucleus. The protein localises to the nucleolus. Required for efficient biogenesis of the 60S ribosomal subunit. In Saccharomyces cerevisiae (strain ATCC 204508 / S288c) (Baker's yeast), this protein is Ribosome assembly protein 3 (RSA3).